The primary structure comprises 1352 residues: Spike glycoprotein (1352 aa).

An N-terminal signal peptide occupies residues 1–12; that stretch reads MIRSVLVLMCSL. Topologically, residues 13 to 1297 are extracellular; sequence TFIGNLTRGQ…GNYTFYQKWP (1285 aa). Residues 22–359 form the BetaCoV S1-NTD domain; it reads QSVDMGHNGT…DDLAQLQCSY (338 aa). N-linked (GlcNAc...) asparagine; by host glycans are attached at residues asparagine 29, asparagine 73, asparagine 111, asparagine 132, asparagine 167, asparagine 174, asparagine 244, and asparagine 250. Cysteine 193 and cysteine 245 are joined by a disulfide. Cystine bridges form between cysteine 347-cysteine 357 and cysteine 391-cysteine 415. The BetaCoV S1-CTD domain maps to 389–585; sequence QECDFTPMLT…GTDTNSVCPM (197 aa). An N-linked (GlcNAc...) asparagine; by host glycan is attached at asparagine 418. 2 cysteine pairs are disulfide-bonded: cysteine 433–cysteine 486 and cysteine 445–cysteine 583. 8 N-linked (GlcNAc...) asparagine; by host glycosylation sites follow: asparagine 495, asparagine 590, asparagine 617, asparagine 716, asparagine 760, asparagine 771, asparagine 782, and asparagine 867. Fusion peptide stretches follow at residues 885-906 and 904-926; these read STIE…MQGY and QGYD…AQYV. Cysteine 909 and cysteine 922 form a disulfide bridge. A heptad repeat 1 region spans residues 991–1041; the sequence is QKIIANKFNQALGAMQTGFTTTNLAFNKVQDAVNANAMALSKLAAELSNTF. A coiled-coil region spans residues 1020–1064; that stretch reads QDAVNANAMALSKLAAELSNTFGAISSSISDILARLDTVEQEAQI. 8 N-linked (GlcNAc...) asparagine; by host glycosylation sites follow: asparagine 1145, asparagine 1172, asparagine 1214, asparagine 1226, asparagine 1242, asparagine 1257, asparagine 1278, and asparagine 1289. The segment at 1247–1286 is heptad repeat 2; that stretch reads GPNFQEISKINTTLLNLNTELMVLSEVVKQLNESYIDLKE. The stretch at 1259–1287 forms a coiled coil; the sequence is TLLNLNTELMVLSEVVKQLNESYIDLKEL. The helical transmembrane segment at 1298–1318 threads the bilayer; it reads WYIWLGFIAGLVALALCVFFI. The Cytoplasmic segment spans residues 1319 to 1352; sequence LCCTGCGTSCLGKLKCNRCCDSYDEYEVEKIHVH. The KxHxx motif lies at 1350-1352; that stretch reads HVH.

The protein belongs to the betacoronaviruses spike protein family. As to quaternary structure, homotrimer; each monomer consists of a S1 and a S2 subunit. The resulting peplomers protrude from the virus surface as spikes. In terms of processing, specific enzymatic cleavages in vivo yield mature proteins. The precursor is processed into S1 and S2 by host cell furin or another cellular protease to yield the mature S1 and S2 proteins. Additionally, a second cleavage leads to the release of a fusion peptide after viral attachment to host cell receptor. The cytoplasmic Cys-rich domain is palmitoylated. Spike glycoprotein is digested within host endosomes.

It is found in the virion membrane. The protein localises to the host endoplasmic reticulum-Golgi intermediate compartment membrane. The protein resides in the host cell membrane. Functionally, attaches the virion to the cell membrane by interacting with host receptor, initiating the infection. Mediates fusion of the virion and cellular membranes by acting as a class I viral fusion protein. Under the current model, the protein has at least three conformational states: pre-fusion native state, pre-hairpin intermediate state, and post-fusion hairpin state. During viral and target cell membrane fusion, the coiled coil regions (heptad repeats) assume a trimer-of-hairpins structure, positioning the fusion peptide in close proximity to the C-terminal region of the ectodomain. The formation of this structure appears to drive apposition and subsequent fusion of viral and target cell membranes. In terms of biological role, acts as a viral fusion peptide which is unmasked following S2 cleavage occurring upon virus endocytosis. This Bat coronavirus HKU5 (BtCoV) protein is Spike glycoprotein.